The sequence spans 210 residues: uncharacterized protein (210 aa).

The first 17 residues, 1–17 (MKRTAVSLCLLTGLLSG), serve as a signal peptide directing secretion. Residue cysteine 18 is the site of N-palmitoyl cysteine attachment. Cysteine 18 is lipidated: S-diacylglycerol cysteine. Polar residues predominate over residues 176–195 (EMKTSPQGSPVSENENANGE). Positions 176–210 (EMKTSPQGSPVSENENANGETRQDMKIDRNDKNAR) are disordered. The span at 196–210 (TRQDMKIDRNDKNAR) shows a compositional bias: basic and acidic residues.

It is found in the cell membrane. This is an uncharacterized protein from Bacillus subtilis (strain 168).